Consider the following 268-residue polypeptide: 4-hydroxy-tetrahydrodipicolinate reductase (268 aa).

NAD(+)-binding positions include 10–15, D36, 99–101, and 123–126; these read GASGRM, GTT, and APNM. H156 functions as the Proton donor/acceptor in the catalytic mechanism. H157 contributes to the (S)-2,3,4,5-tetrahydrodipicolinate binding site. Residue K160 is the Proton donor of the active site. Residue 166–167 coordinates (S)-2,3,4,5-tetrahydrodipicolinate; that stretch reads GT.

This sequence belongs to the DapB family.

The protein localises to the cytoplasm. It carries out the reaction (S)-2,3,4,5-tetrahydrodipicolinate + NAD(+) + H2O = (2S,4S)-4-hydroxy-2,3,4,5-tetrahydrodipicolinate + NADH + H(+). The catalysed reaction is (S)-2,3,4,5-tetrahydrodipicolinate + NADP(+) + H2O = (2S,4S)-4-hydroxy-2,3,4,5-tetrahydrodipicolinate + NADPH + H(+). It functions in the pathway amino-acid biosynthesis; L-lysine biosynthesis via DAP pathway; (S)-tetrahydrodipicolinate from L-aspartate: step 4/4. Its function is as follows. Catalyzes the conversion of 4-hydroxy-tetrahydrodipicolinate (HTPA) to tetrahydrodipicolinate. This is 4-hydroxy-tetrahydrodipicolinate reductase from Janthinobacterium sp. (strain Marseille) (Minibacterium massiliensis).